The chain runs to 360 residues: uncharacterized protein (360 aa).

The 4Fe-4S ferredoxin-type domain maps to 11–40 (KEEVWDTNRCSGCGACVAVCPVNNLYFREE).

This sequence belongs to the FrhB family.

This is an uncharacterized protein from Methanocaldococcus jannaschii (strain ATCC 43067 / DSM 2661 / JAL-1 / JCM 10045 / NBRC 100440) (Methanococcus jannaschii).